A 141-amino-acid chain; its full sequence is Sperm-associated microtubule inner protein 10 (141 aa).

Basic and acidic residues predominate over residues 1–16 (MASEKDDGPALPKLDD). The tract at residues 1 to 33 (MASEKDDGPALPKLDDDNQTAENTCKPAEEQPQ) is disordered.

In terms of assembly, microtubule inner protein component of sperm flagellar doublet microtubules. As to expression, expressed predominantly in the testis.

The protein localises to the cytoplasm. The protein resides in the cytoskeleton. It is found in the flagellum axoneme. Its function is as follows. Microtubule inner protein (MIP) part of the dynein-decorated doublet microtubules (DMTs) in flagellum axoneme, which is required for flagellum beating. May serve to reinforce and thus stabilize the microtubule structure in the sperm flagella. Involved in the regulation of sperm motility. This Mus musculus (Mouse) protein is Sperm-associated microtubule inner protein 10 (Spmip10).